The primary structure comprises 409 residues: MSKTIPIVDAQHAGSAYQHVPGHPDPQLSAVAKGTPTGEYLRRYWQPVALSADVTDRPQMVRILGEDLVLFRDKAGRPGLLYPRCMHRGTSLYYGHVEEAGIRCCYHGWLFAVDGTCLNQPCEPEGGLRREAARQPWYPVEERYGLVFAYMGPPEKKPVLPRYDILEDLEEGEFIEVISGGFVSYADHVEDPNVPYHWLQNWENIMDPYHVYILHSTFSGIQFAENFKILPRVDFEAVDGGVIYHAWRDLEDGRQLERINSALFPNISAIPMIDLSPGQGRWIGWHVAVDDQHYRGFFAARTRQPGNFAPIKMHNGKSWTELSEQEKQDFPGDFEAQFGQGRVTLHGEEHLATSDHGIALLRRQMKQQIAIVQQGGDPAGVHFNEADALVRIRSGNFYTTSDKTETAAD.

The region spanning W45–A149 is the Rieske domain. 4 residues coordinate [2Fe-2S] cluster: C85, H87, C104, and H107. The Fe cation site is built by H210 and H215.

This sequence belongs to the bacterial ring-hydroxylating dioxygenase alpha subunit family. This dioxygenase system consists of two proteins: the alpha subunit (PobA) and a subunit (PobB) that acts as a ferredoxin and a ferredoxin reductase. The cofactor is [2Fe-2S] cluster. It depends on Fe cation as a cofactor.

Its pathway is aromatic compound metabolism; carboxydiphenyl ether degradation. Functionally, degrades exclusively diarylether compounds having carboxyl groups in the 3- or 4-position. Yields a hemiacetal that spontaneously hydrolyzes to phenol and protocatechuate. This Ectopseudomonas oleovorans (Pseudomonas oleovorans) protein is Phenoxybenzoate dioxygenase subunit alpha (pobA).